Consider the following 238-residue polypeptide: Accessory gene regulator protein A (238 aa).

The region spanning 2–125 (KIFVCEDDQR…LKMRIIDCLE (124 aa)) is the Response regulatory domain. The residue at position 59 (Asp-59) is a 4-aspartylphosphate. Positions 143–238 (IELKRGSNSV…FASVRNVKKI (96 aa)) constitute an HTH LytTR-type domain.

Its subcellular location is the cytoplasm. Required for high-level post-exponential phase expression of a series of secreted proteins. This chain is Accessory gene regulator protein A (agrA), found in Staphylococcus epidermidis (strain ATCC 35984 / DSM 28319 / BCRC 17069 / CCUG 31568 / BM 3577 / RP62A).